Reading from the N-terminus, the 557-residue chain is Potassium-transporting ATPase potassium-binding subunit (557 aa).

Helical transmembrane passes span 5–25, 63–83, 132–152, 170–190, 253–273, 283–303, 329–349, 356–376, 379–399, 416–436, 484–504, and 526–546; these read GFLL…PLGS, LSAI…MLLG, GLTV…FALI, LLRI…LFFI, FVQM…FGEV, LLWA…WAEV, VLVS…AVIA, ALGG…FGGV, GLYG…LMIG, LTAL…ALAM, LLAL…MAIA, and LFVG…FIPA.

The protein belongs to the KdpA family. In terms of assembly, the system is composed of three essential subunits: KdpA, KdpB and KdpC.

The protein resides in the cell inner membrane. Its function is as follows. Part of the high-affinity ATP-driven potassium transport (or Kdp) system, which catalyzes the hydrolysis of ATP coupled with the electrogenic transport of potassium into the cytoplasm. This subunit binds the periplasmic potassium ions and delivers the ions to the membrane domain of KdpB through an intramembrane tunnel. This is Potassium-transporting ATPase potassium-binding subunit from Escherichia coli O6:K15:H31 (strain 536 / UPEC).